The following is a 293-amino-acid chain: Bisanhydrobacterioruberin hydratase (293 aa).

7 helical membrane passes run 36-56 (IAVV…EGLL), 66-86 (FVLF…FPLV), 89-109 (RAGL…LVGV), 134-154 (FGLP…VLLL), 171-191 (ATVM…GFWI), 199-219 (GVPW…VLLF), and 254-274 (LFYT…GLLW).

This sequence belongs to the BABR hydratase family.

It is found in the membrane. It carries out the reaction bacterioruberin = bisanhydrobacterioruberin + 2 H2O. It participates in carotenoid biosynthesis. Involved in the biosynthesis of the acyclic C50 carotenoid bacterioruberin (BR). Catalyzes the reaction that introduces hydroxyl groups to C3'' and C3''' of bisanhydrobacterioruberin (BABR) to generate BR. This Haloarcula japonica (strain ATCC 49778 / DSM 6131 / JCM 7785 / NBRC 101032 / NCIMB 13157 / TR-1) protein is Bisanhydrobacterioruberin hydratase.